Reading from the N-terminus, the 308-residue chain is uncharacterized protein (308 aa).

The next 10 helical transmembrane spans lie at 45-65 (LGLA…KIAL), 69-89 (SPFA…LPFL), 100-120 (IGIA…YTTA), 122-142 (NAGF…WLVY), 151-171 (VSGV…SGFN), 172-192 (IGDI…AMIS), 201-221 (TMLA…FAVF), 226-246 (FEIN…ATFV), 263-283 (AAVI…AVLA), and 285-305 (ILTP…IIVS). 2 consecutive EamA domains span residues 52–166 (LIWG…FLSG) and 178–306 (LFCA…IVSL).

Belongs to the EamA transporter family.

It is found in the cell membrane. This is an uncharacterized protein from Archaeoglobus fulgidus (strain ATCC 49558 / DSM 4304 / JCM 9628 / NBRC 100126 / VC-16).